Here is a 65-residue protein sequence, read N- to C-terminus: Large ribosomal subunit protein bL28 (65 aa).

Residues 1 to 26 (MARRDALTGKSALSGQSRSHALNATK) form a disordered region. The segment covering 11–22 (SALSGQSRSHAL) has biased composition (polar residues).

Belongs to the bacterial ribosomal protein bL28 family.

The sequence is that of Large ribosomal subunit protein bL28 from Mycoplasma mycoides subsp. mycoides SC (strain CCUG 32753 / NCTC 10114 / PG1).